The following is a 238-amino-acid chain: Riboflavin synthase (238 aa).

Lumazine-binding repeat units follow at residues 1 to 103 and 104 to 205; these read MFTG…FGGH and YVQG…EKQI. 2,4-dihydroxypteridine contacts are provided by residues 4–6, 54–56, and 68–73; these read GIV, CLT, and GISPET. Position 95 is a phosphoserine (serine 95). Residues 107–109, lysine 143, 152–154, and 170–175 contribute to the 2,4-dihydroxypteridine site; these read GHV, SLT, and SMIKHT.

As to quaternary structure, homotrimer.

The catalysed reaction is 2 6,7-dimethyl-8-(1-D-ribityl)lumazine + H(+) = 5-amino-6-(D-ribitylamino)uracil + riboflavin. Its pathway is cofactor biosynthesis; riboflavin biosynthesis; riboflavin from 2-hydroxy-3-oxobutyl phosphate and 5-amino-6-(D-ribitylamino)uracil: step 2/2. In terms of biological role, catalyzes the dismutation of two molecules of 6,7-dimethyl-8-ribityllumazine, resulting in the formation of riboflavin and 5-amino-6-(D-ribitylamino)uracil. The sequence is that of Riboflavin synthase from Saccharomyces cerevisiae (strain ATCC 204508 / S288c) (Baker's yeast).